Here is a 404-residue protein sequence, read N- to C-terminus: Probable tRNA sulfurtransferase (404 aa).

The region spanning 60 to 165 is the THUMP domain; it reads QPIVEALKLV…DEAAYISYEE (106 aa). ATP is bound by residues 183-184, 208-209, arginine 265, glycine 287, and glutamine 296; these read ML and HF.

This sequence belongs to the ThiI family.

Its subcellular location is the cytoplasm. The enzyme catalyses [ThiI sulfur-carrier protein]-S-sulfanyl-L-cysteine + a uridine in tRNA + 2 reduced [2Fe-2S]-[ferredoxin] + ATP + H(+) = [ThiI sulfur-carrier protein]-L-cysteine + a 4-thiouridine in tRNA + 2 oxidized [2Fe-2S]-[ferredoxin] + AMP + diphosphate. It catalyses the reaction [ThiS sulfur-carrier protein]-C-terminal Gly-Gly-AMP + S-sulfanyl-L-cysteinyl-[cysteine desulfurase] + AH2 = [ThiS sulfur-carrier protein]-C-terminal-Gly-aminoethanethioate + L-cysteinyl-[cysteine desulfurase] + A + AMP + 2 H(+). It functions in the pathway cofactor biosynthesis; thiamine diphosphate biosynthesis. Catalyzes the ATP-dependent transfer of a sulfur to tRNA to produce 4-thiouridine in position 8 of tRNAs, which functions as a near-UV photosensor. Also catalyzes the transfer of sulfur to the sulfur carrier protein ThiS, forming ThiS-thiocarboxylate. This is a step in the synthesis of thiazole, in the thiamine biosynthesis pathway. The sulfur is donated as persulfide by IscS. In Streptococcus pyogenes serotype M3 (strain ATCC BAA-595 / MGAS315), this protein is Probable tRNA sulfurtransferase.